The sequence spans 286 residues: Hydroxysteroid 11-beta-dehydrogenase 1-like protein (286 aa).

The N-terminal stretch at 1–17 (MGIHIKRWCFIILVASA) is a signal peptide. Residues 39-65 (GASTGIGEEIAYHYARAGAKLVLTARR), 90-91 (DM), and 117-119 (NHI) each bind NADP(+). Ser-168 contacts substrate. Catalysis depends on Tyr-181, which acts as the Proton acceptor. NADP(+) is bound by residues 181–185 (YAASK) and 214–220 (GLIDTQS).

This sequence belongs to the short-chain dehydrogenases/reductases (SDR) family.

The protein resides in the secreted. The catalysed reaction is cortisone + NADPH + H(+) = cortisol + NADP(+). Its function is as follows. Unidirectional NADP(+)-dependent cortisol dehydrogenase (in vitro). The protein is Hydroxysteroid 11-beta-dehydrogenase 1-like protein (hsd11b1l) of Xenopus tropicalis (Western clawed frog).